We begin with the raw amino-acid sequence, 272 residues long: Hydroxyethylthiazole kinase (272 aa).

Substrate is bound at residue M44. Residues K119 and T172 each contribute to the ATP site. G199 lines the substrate pocket.

The protein belongs to the Thz kinase family. Mg(2+) serves as cofactor.

The catalysed reaction is 5-(2-hydroxyethyl)-4-methylthiazole + ATP = 4-methyl-5-(2-phosphooxyethyl)-thiazole + ADP + H(+). The protein operates within cofactor biosynthesis; thiamine diphosphate biosynthesis; 4-methyl-5-(2-phosphoethyl)-thiazole from 5-(2-hydroxyethyl)-4-methylthiazole: step 1/1. Functionally, catalyzes the phosphorylation of the hydroxyl group of 4-methyl-5-beta-hydroxyethylthiazole (THZ). The polypeptide is Hydroxyethylthiazole kinase (Enterococcus faecalis (strain ATCC 700802 / V583)).